The chain runs to 881 residues: DNA mismatch repair protein MutS (881 aa).

Residue 627–634 (GPNMGGKS) coordinates ATP.

It belongs to the DNA mismatch repair MutS family.

Its function is as follows. This protein is involved in the repair of mismatches in DNA. It is possible that it carries out the mismatch recognition step. This protein has a weak ATPase activity. The polypeptide is DNA mismatch repair protein MutS (Acinetobacter baumannii (strain AB307-0294)).